We begin with the raw amino-acid sequence, 226 residues long: Enolase-phosphatase E1 (226 aa).

Belongs to the HAD-like hydrolase superfamily. MasA/MtnC family. Monomer. Mg(2+) is required as a cofactor.

The enzyme catalyses 5-methylsulfanyl-2,3-dioxopentyl phosphate + H2O = 1,2-dihydroxy-5-(methylsulfanyl)pent-1-en-3-one + phosphate. It functions in the pathway amino-acid biosynthesis; L-methionine biosynthesis via salvage pathway; L-methionine from S-methyl-5-thio-alpha-D-ribose 1-phosphate: step 3/6. Its pathway is amino-acid biosynthesis; L-methionine biosynthesis via salvage pathway; L-methionine from S-methyl-5-thio-alpha-D-ribose 1-phosphate: step 4/6. Bifunctional enzyme that catalyzes the enolization of 2,3-diketo-5-methylthiopentyl-1-phosphate (DK-MTP-1-P) into the intermediate 2-hydroxy-3-keto-5-methylthiopentenyl-1-phosphate (HK-MTPenyl-1-P), which is then dephosphorylated to form the acireductone 1,2-dihydroxy-3-keto-5-methylthiopentene (DHK-MTPene). The protein is Enolase-phosphatase E1 of Alcanivorax borkumensis (strain ATCC 700651 / DSM 11573 / NCIMB 13689 / SK2).